The sequence spans 210 residues: Calaxin (210 aa).

EF-hand domains follow at residues 64 to 99 (TDDM…FLRG), 100 to 135 (TLDE…SLIR), and 145 to 180 (GIKD…ENLL). The Ca(2+) site is built by aspartate 77, aspartate 79, aspartate 81, tyrosine 83, glutamate 88, aspartate 113, asparagine 115, aspartate 117, tyrosine 119, glutamate 124, aspartate 158, aspartate 160, aspartate 162, arginine 164, and aspartate 169.

As to quaternary structure, component of the outer dynein arm-docking complex along with ODAD1, ODAD2, ODAD3 and ODAD4.

The protein resides in the cytoplasm. It is found in the cytoskeleton. The protein localises to the cilium axoneme. It localises to the cell projection. Its subcellular location is the cilium. The protein resides in the flagellum. Functionally, component of the outer dynein arm-docking complex (ODA-DC) that mediates outer dynein arms (ODA) binding onto the doublet microtubule. Seems to regulate the assembly of both ODAs and their axonemal docking complex onto ciliary microtubules. Regulates ciliary and flagellar motility and is required for cilia-driven determination of body laterality. Its function is as follows. Regulates ciliary motility and is required for cilia-driven determination of body laterality. The protein is Calaxin (clxn) of Danio rerio (Zebrafish).